A 480-amino-acid polypeptide reads, in one-letter code: Glycogen synthase (480 aa).

Lys15 is an ADP-alpha-D-glucose binding site.

Belongs to the glycosyltransferase 1 family. Bacterial/plant glycogen synthase subfamily.

It carries out the reaction [(1-&gt;4)-alpha-D-glucosyl](n) + ADP-alpha-D-glucose = [(1-&gt;4)-alpha-D-glucosyl](n+1) + ADP + H(+). The protein operates within glycan biosynthesis; glycogen biosynthesis. Its function is as follows. Synthesizes alpha-1,4-glucan chains using ADP-glucose. This Rhizobium tropici protein is Glycogen synthase.